The primary structure comprises 139 residues: Ribonuclease P protein component (139 aa).

It belongs to the RnpA family. In terms of assembly, consists of a catalytic RNA component (M1 or rnpB) and a protein subunit.

The enzyme catalyses Endonucleolytic cleavage of RNA, removing 5'-extranucleotides from tRNA precursor.. Functionally, RNaseP catalyzes the removal of the 5'-leader sequence from pre-tRNA to produce the mature 5'-terminus. It can also cleave other RNA substrates such as 4.5S RNA. The protein component plays an auxiliary but essential role in vivo by binding to the 5'-leader sequence and broadening the substrate specificity of the ribozyme. This Paraburkholderia xenovorans (strain LB400) protein is Ribonuclease P protein component.